The following is a 521-amino-acid chain: Glucosidase 2 subunit beta (521 aa).

An N-terminal signal peptide occupies residues 1 to 14; that stretch reads MLLLLLLLLPLCWA. Ser24 is subject to Phosphoserine. 2 consecutive LDL-receptor class A domains span residues 37–71 and 69–113; these read FTCLDGTATIPFDQVNDDYCDCKDGSDEPGTAACP and ACPN…TVCE. Intrachain disulfides connect Cys39–Cys58 and Cys56–Cys70. Residue Asp49 coordinates substrate. Positions 50, 53, 55, 57, 63, and 64 each coordinate Ca(2+). A substrate-binding site is contributed by Asp53. Asn72 is a glycosylation site (N-linked (GlcNAc...) asparagine). Disulfide bonds link Cys77/Cys99, Cys97/Cys112, and Cys100/Cys116. Ser89 carries the post-translational modification Phosphoserine; by PKC. Positions 91, 94, 96, 98, 104, and 105 each coordinate Ca(2+). An N6-succinyllysine modification is found at Lys166. Ser168 is modified (phosphoserine). 2 consecutive EF-hand domains span residues 209–244 and 245–290; these read REQERAASAFQELDDNMDGMVSLAELQTHPELDTDG and DGAL…TDIP. The Ca(2+) site is built by Asp222, Asn224, Asp226, Met228, and Glu233. 2 disordered regions span residues 226–267 and 280–350; these read DGMV…DTTS and YRSE…EKMP. 2 stretches are compositionally biased toward acidic residues: residues 241–253 and 308–331; these read DTDGDGALSEEEA and TEEEEEEEEEPEEEEEEEEEEEEA. Over residues 332-343 the composition is skewed to pro residues; that stretch reads PPPLQPPQPPSP. Residues Ser376 and Ser383 each carry the phosphoserine; by PKC modification. The region spanning 406-507 is the MRH domain; sequence SQCYELTTNE…ELMTPAACPE (102 aa). A disulfide bond links Cys408 and Cys421. Residue Ser427 is modified to Phosphoserine; by PKC. 2 cysteine pairs are disulfide-bonded: Cys464/Cys493 and Cys478/Cys505. A glycan (N-linked (GlcNAc...) asparagine) is linked at Asn469. The Prevents secretion from ER signature appears at 518–521; sequence HDEL.

Heterodimer of a catalytic alpha subunit (GANAB) and a beta subunit (PRKCSH). Binds glycosylated PTPRC. Expressed in kidney (at protein level).

Its subcellular location is the endoplasmic reticulum. It functions in the pathway glycan metabolism; N-glycan metabolism. In terms of biological role, regulatory subunit of glucosidase II that cleaves sequentially the 2 innermost alpha-1,3-linked glucose residues from the Glc(2)Man(9)GlcNAc(2) oligosaccharide precursor of immature glycoproteins. Required for efficient PKD1/Polycystin-1 biogenesis and trafficking to the plasma membrane of the primary cilia. In Mus musculus (Mouse), this protein is Glucosidase 2 subunit beta.